A 379-amino-acid polypeptide reads, in one-letter code: Cytochrome b (379 aa).

The next 4 helical transmembrane spans lie at 34–54, 78–99, 114–134, and 179–199; these read FGSL…LLAM, WLIR…YLHI, WNTG…GYVL, and FFAL…IHLT. Residues histidine 84 and histidine 98 each contribute to the heme b site. Positions 183 and 197 each coordinate heme b. Residue histidine 202 participates in a ubiquinone binding. 4 helical membrane-spanning segments follow: residues 227-247, 289-309, 321-341, and 348-368; these read LKDI…AFFS, LGGV…PFLH, LSQM…WIGS, and FIII…ILFP.

It belongs to the cytochrome b family. The cytochrome bc1 complex contains 11 subunits: 3 respiratory subunits (MT-CYB, CYC1 and UQCRFS1), 2 core proteins (UQCRC1 and UQCRC2) and 6 low-molecular weight proteins (UQCRH/QCR6, UQCRB/QCR7, UQCRQ/QCR8, UQCR10/QCR9, UQCR11/QCR10 and a cleavage product of UQCRFS1). This cytochrome bc1 complex then forms a dimer. Heme b serves as cofactor.

The protein resides in the mitochondrion inner membrane. Its function is as follows. Component of the ubiquinol-cytochrome c reductase complex (complex III or cytochrome b-c1 complex) that is part of the mitochondrial respiratory chain. The b-c1 complex mediates electron transfer from ubiquinol to cytochrome c. Contributes to the generation of a proton gradient across the mitochondrial membrane that is then used for ATP synthesis. The polypeptide is Cytochrome b (MT-CYB) (Dromaius novaehollandiae (Emu)).